A 233-amino-acid chain; its full sequence is Enolase-phosphatase E1 (233 aa).

It belongs to the HAD-like hydrolase superfamily. MasA/MtnC family. Monomer. Mg(2+) is required as a cofactor.

It carries out the reaction 5-methylsulfanyl-2,3-dioxopentyl phosphate + H2O = 1,2-dihydroxy-5-(methylsulfanyl)pent-1-en-3-one + phosphate. It functions in the pathway amino-acid biosynthesis; L-methionine biosynthesis via salvage pathway; L-methionine from S-methyl-5-thio-alpha-D-ribose 1-phosphate: step 3/6. The protein operates within amino-acid biosynthesis; L-methionine biosynthesis via salvage pathway; L-methionine from S-methyl-5-thio-alpha-D-ribose 1-phosphate: step 4/6. Bifunctional enzyme that catalyzes the enolization of 2,3-diketo-5-methylthiopentyl-1-phosphate (DK-MTP-1-P) into the intermediate 2-hydroxy-3-keto-5-methylthiopentenyl-1-phosphate (HK-MTPenyl-1-P), which is then dephosphorylated to form the acireductone 1,2-dihydroxy-3-keto-5-methylthiopentene (DHK-MTPene). This chain is Enolase-phosphatase E1, found in Hahella chejuensis (strain KCTC 2396).